The sequence spans 186 residues: Ribosome-recycling factor (186 aa).

Belongs to the RRF family.

The protein localises to the cytoplasm. Responsible for the release of ribosomes from messenger RNA at the termination of protein biosynthesis. May increase the efficiency of translation by recycling ribosomes from one round of translation to another. The chain is Ribosome-recycling factor from Chlorobium limicola (strain DSM 245 / NBRC 103803 / 6330).